A 497-amino-acid chain; its full sequence is B3 domain-containing protein REM1 (497 aa).

3 consecutive DNA-binding regions (TF-B3) follow at residues 7-92 (PSLF…SSES), 142-239 (FLRA…LCSH), and 278-379 (FLTQ…HSKI). The disordered stretch occupies residues 87–135 (AVSSESDDDESDDTDDSESDDESNDTDDSESDDSEDNGEGDSSLVNKEA). Residues 91-125 (ESDDDESDDTDDSESDDESNDTDDSESDDSEDNGE) are compositionally biased toward acidic residues.

In terms of tissue distribution, specifically expressed in the reproductive meristem.

It localises to the nucleus. Its function is as follows. May play a role in flower development. In Brassica oleracea var. botrytis (Cauliflower), this protein is B3 domain-containing protein REM1 (REM1).